A 468-amino-acid chain; its full sequence is UDP-N-acetylmuramate--L-alanine ligase (468 aa).

An ATP-binding site is contributed by 112-118; that stretch reads GTHGKTT.

This sequence belongs to the MurCDEF family.

The protein localises to the cytoplasm. The enzyme catalyses UDP-N-acetyl-alpha-D-muramate + L-alanine + ATP = UDP-N-acetyl-alpha-D-muramoyl-L-alanine + ADP + phosphate + H(+). It functions in the pathway cell wall biogenesis; peptidoglycan biosynthesis. Cell wall formation. In Bordetella pertussis (strain Tohama I / ATCC BAA-589 / NCTC 13251), this protein is UDP-N-acetylmuramate--L-alanine ligase.